The sequence spans 62 residues: Large ribosomal subunit protein eL24 (62 aa).

Residues cysteine 6, cysteine 9, cysteine 32, and cysteine 36 each contribute to the Zn(2+) site. Residues cysteine 6 to cysteine 36 form a C4-type zinc finger.

The protein belongs to the eukaryotic ribosomal protein eL24 family. Part of the 50S ribosomal subunit. Forms a cluster with proteins L3 and L14. Zn(2+) is required as a cofactor.

In terms of biological role, binds to the 23S rRNA. In Methanococcoides burtonii (strain DSM 6242 / NBRC 107633 / OCM 468 / ACE-M), this protein is Large ribosomal subunit protein eL24.